The following is a 312-amino-acid chain: Methionyl-tRNA formyltransferase (312 aa).

110–113 contacts (6S)-5,6,7,8-tetrahydrofolate; sequence SLLP.

Belongs to the Fmt family.

The catalysed reaction is L-methionyl-tRNA(fMet) + (6R)-10-formyltetrahydrofolate = N-formyl-L-methionyl-tRNA(fMet) + (6S)-5,6,7,8-tetrahydrofolate + H(+). Attaches a formyl group to the free amino group of methionyl-tRNA(fMet). The formyl group appears to play a dual role in the initiator identity of N-formylmethionyl-tRNA by promoting its recognition by IF2 and preventing the misappropriation of this tRNA by the elongation apparatus. This chain is Methionyl-tRNA formyltransferase, found in Mycobacterium ulcerans (strain Agy99).